We begin with the raw amino-acid sequence, 259 residues long: Protein N-terminal and lysine N-methyltransferase efm7 (259 aa).

S-adenosyl-L-methionine contacts are provided by residues Trp-56, 83 to 85 (GAA), Asp-105, Trp-139, and Ala-163.

It belongs to the class I-like SAM-binding methyltransferase superfamily. EFM7 family.

It is found in the cytoplasm. In terms of biological role, S-adenosyl-L-methionine-dependent protein methyltransferase that trimethylates the N-terminal glycine 'Gly-2' of elongation factor 1-alpha, before also catalyzing the mono- and dimethylation of 'Lys-3'. This is Protein N-terminal and lysine N-methyltransferase efm7 from Aspergillus fumigatus (strain ATCC MYA-4609 / CBS 101355 / FGSC A1100 / Af293) (Neosartorya fumigata).